The chain runs to 857 residues: A-kinase anchor protein 1, mitochondrial (857 aa).

The N-terminal 29 residues, 1-29, are a transit peptide targeting the mitochondrion; sequence MAIQLRSLFPLALPGMLALLGWWWFFSRK. The residue at position 55 (S55) is a Phosphoserine. The interval 65 to 121 is disordered; that stretch reads VAPTVTQPPGREEQRCVDKPSTEPLALPRTRQVRRRSESSGNLPSVADTRSQPGPCR. The segment covering 74 to 85 has biased composition (basic and acidic residues); that stretch reads GREEQRCVDKPS. Residues S101, S103, and S164 each carry the phosphoserine modification. Residues 103–116 show a composition bias toward polar residues; it reads SSGNLPSVADTRSQ. 2 disordered regions span residues 165–198 and 260–303; these read ALGK…GDAV and FVEP…VPEN. The segment covering 286–299 has biased composition (basic and acidic residues); it reads SDRDLAGELDKDET. A PKA-RII subunit binding domain region spans residues 306 to 319; it reads IKQAAFQLISQVIL. 3 disordered regions span residues 336 to 437, 466 to 497, and 512 to 554; these read QVHP…NPRG, STSG…TQPF, and EDGW…QAGS. Over residues 354-379 the composition is skewed to polar residues; that stretch reads PASQETSLGQDTSDPASTRTGATASP. Residue T401 is modified to Phosphothreonine. Residues 466-482 are compositionally biased toward polar residues; sequence STSGLEDSCTETISSSG. At T487 the chain carries Phosphothreonine. S527 and S546 each carry phosphoserine. Over residues 545–554 the composition is skewed to polar residues; it reads DSPQSVQAGS. One can recognise a KH domain in the interval 561 to 625; it reads LIIWEIEVPK…HHVDKALNLI (65 aa). A Tudor domain is found at 712 to 771; the sequence is PVEITVICAAPGADGAWWRAQVVASYEETNEVEIRYVDYGGYKRVKVDVLRQIRSDFVTL.

In terms of assembly, interacts with SLC8A3. Interacts with CFAP91. Interacts with CLPB. Interacts with NDUFS1. In terms of tissue distribution, highest expression in testis, heart, liver, skeletal muscle, intestine and kidney, followed by brain and lung. No expression in spleen. Isoform 1/D-AKAP1A is expressed predominantly in testis whereas isoform 4/D-AKAP1D is expressed primarily in liver. Expression is decreased in hearts of diabetic mice (at protein level).

It localises to the mitochondrion outer membrane. It is found in the mitochondrion. The protein localises to the endoplasmic reticulum. Its function is as follows. Differentially targeted protein that binds to type I and II regulatory subunits of protein kinase A. Anchors them to the cytoplasmic face of the mitochondrial outer membrane or allows them to reside in the endoplasmic reticulum. Involved in mitochondrial-mediated antiviral innate immunity. Promotes translocation of NDUFS1 into mitochondria to regulate mitochondrial membrane respiratory chain NADH dehydrogenase (Complex I) activity. Under diabetic conditions, myocardial AKAP1 expression decreases which blocks the translocation of NDUFS1 from the cytosol to mitochondria. Reduction of NDUFS1 in mitochondria decreases ATP production and increases mitochondrial ROS level, which causes mitochondrial dysfunction and cell apoptosis, respectively, thereby leading to cardiac dysfunction. The protein is A-kinase anchor protein 1, mitochondrial of Mus musculus (Mouse).